The chain runs to 200 residues: Peptidyl-tRNA hydrolase (200 aa).

TRNA is bound at residue Y15. The active-site Proton acceptor is H20. Residues F66, N68, and N114 each contribute to the tRNA site.

The protein belongs to the PTH family. In terms of assembly, monomer.

It is found in the cytoplasm. The catalysed reaction is an N-acyl-L-alpha-aminoacyl-tRNA + H2O = an N-acyl-L-amino acid + a tRNA + H(+). Its function is as follows. Hydrolyzes ribosome-free peptidyl-tRNAs (with 1 or more amino acids incorporated), which drop off the ribosome during protein synthesis, or as a result of ribosome stalling. In terms of biological role, catalyzes the release of premature peptidyl moieties from peptidyl-tRNA molecules trapped in stalled 50S ribosomal subunits, and thus maintains levels of free tRNAs and 50S ribosomes. The chain is Peptidyl-tRNA hydrolase from Ralstonia nicotianae (strain ATCC BAA-1114 / GMI1000) (Ralstonia solanacearum).